The primary structure comprises 424 residues: Serine--tRNA ligase (424 aa).

232–234 lines the L-serine pocket; sequence TAE. 263–265 serves as a coordination point for ATP; sequence RKE. Glu286 provides a ligand contact to L-serine. 350-353 is an ATP binding site; the sequence is EISS. Position 386 (Ser386) interacts with L-serine.

It belongs to the class-II aminoacyl-tRNA synthetase family. Type-1 seryl-tRNA synthetase subfamily. Homodimer. The tRNA molecule binds across the dimer.

Its subcellular location is the cytoplasm. It carries out the reaction tRNA(Ser) + L-serine + ATP = L-seryl-tRNA(Ser) + AMP + diphosphate + H(+). The enzyme catalyses tRNA(Sec) + L-serine + ATP = L-seryl-tRNA(Sec) + AMP + diphosphate + H(+). It participates in aminoacyl-tRNA biosynthesis; selenocysteinyl-tRNA(Sec) biosynthesis; L-seryl-tRNA(Sec) from L-serine and tRNA(Sec): step 1/1. Functionally, catalyzes the attachment of serine to tRNA(Ser). Is also able to aminoacylate tRNA(Sec) with serine, to form the misacylated tRNA L-seryl-tRNA(Sec), which will be further converted into selenocysteinyl-tRNA(Sec). This chain is Serine--tRNA ligase, found in Thermodesulfovibrio yellowstonii (strain ATCC 51303 / DSM 11347 / YP87).